A 763-amino-acid chain; its full sequence is Phosphoglycerol transferase I (763 aa).

The next 4 membrane-spanning stretches (helical) occupy residues 1–21, 26–46, 77–97, and 108–128; these read MSEL…AWKA, WWFA…ITLY, ILPG…LGWI, and VGYS…SPAF.

It belongs to the OpgB family.

Its subcellular location is the cell inner membrane. The enzyme catalyses a phosphatidylglycerol + a membrane-derived-oligosaccharide D-glucose = a 1,2-diacyl-sn-glycerol + a membrane-derived-oligosaccharide 6-(glycerophospho)-D-glucose.. The protein operates within glycan metabolism; osmoregulated periplasmic glucan (OPG) biosynthesis. Functionally, transfers a phosphoglycerol residue from phosphatidylglycerol to the membrane-bound nascent glucan backbones. The polypeptide is Phosphoglycerol transferase I (Salmonella paratyphi B (strain ATCC BAA-1250 / SPB7)).